A 371-amino-acid polypeptide reads, in one-letter code: Cytochrome b (371 aa).

The next 4 membrane-spanning stretches (helical) occupy residues 25-45 (FGSM…FLAV), 69-90 (WMMQ…YIHI), 105-125 (WLSG…GYVL), and 170-190 (FFAL…LHIM). Heme b-binding residues include His-75 and His-89. His-174 and His-188 together coordinate heme b. Residue His-193 coordinates a ubiquinone. The next 4 membrane-spanning stretches (helical) occupy residues 218-238 (YKDL…VSFL), 280-300 (LWGA…PFTH), 312-332 (IMQL…WAAT), and 339-358 (FTMI…IMNP).

This sequence belongs to the cytochrome b family. The cytochrome bc1 complex contains 3 respiratory subunits (MT-CYB, CYC1 and UQCRFS1), 2 core proteins (UQCRC1 and UQCRC2) and probably 6 low-molecular weight proteins. Requires heme b as cofactor.

It is found in the mitochondrion inner membrane. Functionally, component of the ubiquinol-cytochrome c reductase complex (complex III or cytochrome b-c1 complex) that is part of the mitochondrial respiratory chain. The b-c1 complex mediates electron transfer from ubiquinol to cytochrome c. Contributes to the generation of a proton gradient across the mitochondrial membrane that is then used for ATP synthesis. The sequence is that of Cytochrome b (MT-CYB) from Eryx miliaris nogaiorum (Black sand boa).